A 307-amino-acid polypeptide reads, in one-letter code: Homoserine O-acetyltransferase (307 aa).

Cys142 serves as the catalytic Acyl-thioester intermediate. 2 residues coordinate substrate: Lys163 and Ser192. Catalysis depends on His235, which acts as the Proton acceptor. Glu237 is a catalytic residue. Arg249 is a substrate binding site.

Belongs to the MetA family.

Its subcellular location is the cytoplasm. It catalyses the reaction L-homoserine + acetyl-CoA = O-acetyl-L-homoserine + CoA. Its pathway is amino-acid biosynthesis; L-methionine biosynthesis via de novo pathway; O-acetyl-L-homoserine from L-homoserine: step 1/1. Functionally, transfers an acetyl group from acetyl-CoA to L-homoserine, forming acetyl-L-homoserine. The protein is Homoserine O-acetyltransferase of Sinorhizobium fredii (strain NBRC 101917 / NGR234).